The sequence spans 418 residues: D-inositol 3-phosphate glycosyltransferase (418 aa).

Histidine 9 contacts 1D-myo-inositol 3-phosphate. UDP-N-acetyl-alpha-D-glucosamine is bound by residues 15–16 (QP) and glycine 23. Residues 20 to 25 (DSGGMN), lysine 78, tyrosine 110, threonine 134, and arginine 154 each bind 1D-myo-inositol 3-phosphate. Positions 231, 236, and 294 each coordinate UDP-N-acetyl-alpha-D-glucosamine. 3 residues coordinate Mg(2+): tyrosine 303, arginine 304, and alanine 306. Glutamate 316 and glutamate 324 together coordinate UDP-N-acetyl-alpha-D-glucosamine. A Mg(2+)-binding site is contributed by threonine 330.

The protein belongs to the glycosyltransferase group 1 family. MshA subfamily. As to quaternary structure, homodimer.

It catalyses the reaction 1D-myo-inositol 3-phosphate + UDP-N-acetyl-alpha-D-glucosamine = 1D-myo-inositol 2-acetamido-2-deoxy-alpha-D-glucopyranoside 3-phosphate + UDP + H(+). Its function is as follows. Catalyzes the transfer of a N-acetyl-glucosamine moiety to 1D-myo-inositol 3-phosphate to produce 1D-myo-inositol 2-acetamido-2-deoxy-glucopyranoside 3-phosphate in the mycothiol biosynthesis pathway. The polypeptide is D-inositol 3-phosphate glycosyltransferase (Corynebacterium glutamicum (strain R)).